The sequence spans 646 residues: Kinesin-like protein klp-20 (646 aa).

Residues 6 to 331 form the Kinesin motor domain; the sequence is KVKVVVRCRP…LRYANRAKNI (326 aa). 91–98 serves as a coordination point for ATP; the sequence is GQTGTGKT. Positions 342-552 form a coiled coil; that stretch reads KDAQLRKFQL…LRKELLLNIA (211 aa). The segment at 525 to 550 is interaction with klp-11; it reads LEEDHQRQVEAMLDDIRQLRKELLLN. Residues 623–646 form a disordered region; the sequence is TAEHRPRTSSKKHRASIRLQQLLT. The span at 629-638 shows a compositional bias: basic residues; sequence RTSSKKHRAS.

It belongs to the TRAFAC class myosin-kinesin ATPase superfamily. Kinesin family. Kinesin II subfamily. In terms of assembly, component of the kinesin II motor complex, a heterotrimeric complex composed of kap-1, klp-11 and klp-20. Interacts (via C-terminus) with klp-11 (via C-terminus) to form a heterodimer. Furthermore, within the heterodimer, the C-termini of klp-20 and klp-11 interact to form a coiled coil (stalk) or tail domain, and this is necessary for association with kap-1, and kinesin II motor complex activity upon IFT cargo binding. Prior to cargo binding, the klp-11/klp-20 heterodimer is autoinhibited by the tail domain of the heterodimer, which folds onto the kinesin motor domain. Cargo binding to the heterodimer relieves the autoinhibition, and allows for an extended conformation of the tail domain, and function of the heterodimer.

Its subcellular location is the cell projection. The protein resides in the cilium. It localises to the cytoplasm. The protein localises to the cytoskeleton. Component of the kinesin II motor complex (composed of kap-1 and the heterodimeric motor proteins klp-11 and klp-20) which is required for intraflagellar transport (IFT). Heterodimerizes with klp-11 to form a 'processive' molecular motor upon IFT cargo binding, which, within the kinesin II motor complex, binds to and moves along microtubules in a unidirectional manner (without dissociation of the heterodimer), and in turn, is responsible for the IFT of cargo. Specifically, the kinesin II motor complex, together with the kinesin motor protein osm-3 moves along microtubules and is required for anterograde IFT along the middle segment of the sensory neuron cilia. In particular, the kinesin II motor complex delivers specific ciliary cargo proteins such as che-3 which are related to motility to ciliary tips. This is likely mediated by IFT complexes A and B. The chain is Kinesin-like protein klp-20 from Caenorhabditis elegans.